A 199-amino-acid chain; its full sequence is Achaete-scute homolog 1 (199 aa).

The segment at 37–56 is disordered; the sequence is PAEEQQASKAKPIKRQRSAS. A bHLH domain is found at 81 to 133; that stretch reads AAVARRNERERNRVKLVNLGFATLREHVPNGAANKKMSKVETLRSAVEYIRAL. Residues 162-179 show a composition bias toward polar residues; the sequence is HDMNSMAGSPVSSYSSDE. Positions 162 to 189 are disordered; sequence HDMNSMAGSPVSSYSSDEGSYDPLSPEE.

In terms of assembly, efficient DNA binding requires dimerization with another bHLH protein. In terms of tissue distribution, neuronal precursor cells.

The protein resides in the nucleus. Functionally, transcription factor that plays a key role in neuronal differentiation: acts as a pioneer transcription factor, accessing closed chromatin to allow other factors to bind and activate neural pathways. Directly binds the E box motif (5'-CANNTG-3') on promoters and promotes transcription of neuronal genes. The combination of three transcription factors, ASCL1, POU3F2/BRN2 and MYT1L, is sufficient to reprogram fibroblasts and other somatic cells into induced neuronal (iN) cells in vitro. This chain is Achaete-scute homolog 1 (ascl1), found in Xenopus laevis (African clawed frog).